A 170-amino-acid polypeptide reads, in one-letter code: Alpha-crystallin A chain (170 aa).

Met1 carries the post-translational modification N-acetylmethionine. The required for complex formation with BFSP1 and BFSP2 stretch occupies residues 1-63; that stretch reads MDVTIQHPWF…RTVLDSGISE (63 aa). Deamidated glutamine; partial is present on Gln6. Ser45 bears the Phosphoserine mark. Gln50 bears the Deamidated glutamine; partial mark. A sHSP domain is found at 52-161; sequence LFRTVLDSGI…SERTIPVSRE (110 aa). 2 positions are modified to N6-acetyllysine: Lys70 and Lys99. Residue His100 coordinates Zn(2+). Deamidated asparagine; partial is present on Asn101. Residues Glu102, His107, and His151 each coordinate Zn(2+). Residues 144-170 form a disordered region; that stretch reads PKIVDPSHSERTIPVSREEKPSSAPSS. Over residues 148–164 the composition is skewed to basic and acidic residues; the sequence is DPSHSERTIPVSREEKP. A glycan (O-linked (GlcNAc) serine) is linked at Ser159.

This sequence belongs to the small heat shock protein (HSP20) family. Heteromer composed of three CRYAA and one CRYAB subunits. Inter-subunit bridging via zinc ions enhances stability, which is crucial as there is no protein turn over in the lens. Can also form homodimers and homotetramers (dimers of dimers) which serve as the building blocks of homooligomers. Within homooligomers, the zinc-binding motif is created from residues of 3 different molecules. His-100 and Glu-102 from one molecule are ligands of the zinc ion, and His-107 and His-151 residues from additional molecules complete the site with tetrahedral coordination geometry. Part of a complex required for lens intermediate filament formation composed of BFSP1, BFSP2 and CRYAA. In terms of processing, acetylation at Lys-70 may increase chaperone activity. Post-translationally, undergoes age-dependent proteolytical cleavage at the C-terminus.

It is found in the cytoplasm. Its subcellular location is the nucleus. In terms of biological role, contributes to the transparency and refractive index of the lens. Acts as a chaperone, preventing aggregation of various proteins under a wide range of stress conditions. Required for the correct formation of lens intermediate filaments as part of a complex composed of BFSP1, BFSP2 and CRYAA. The polypeptide is Alpha-crystallin A chain (CRYAA) (Choloepus hoffmanni (Hoffmann's two-fingered sloth)).